A 251-amino-acid polypeptide reads, in one-letter code: MRKKKFLSRFSFSSLFLLCGTLLSACTGIQADLRNLIKETTGKDIDLSKAIKTKEGKKNIIASLKKSYEVNPKDTTKLLLDAWKQSFEEGKLGIADFDFDHVAYPQTNDPFTMERKVDHFQMTYQSFKDLLVEARLSYTFNWFGDYSSGDFTAKRGDKHYFYLFLKIKSDPKKQFSAKKFLTEGEAFTDQEGKQTTRNLEWIEFSASISWWTKGKDDVSQKSLKKFLESFATNTGYSSDINLFSYLEYLIK.

Residues 1–25 (MRKKKFLSRFSFSSLFLLCGTLLSA) form the signal peptide. The N-palmitoyl cysteine moiety is linked to residue Cys-26. Residue Cys-26 is the site of S-diacylglycerol cysteine attachment.

This sequence belongs to the MG439/MG440 family.

It localises to the cell membrane. This is an uncharacterized protein from Mycoplasma pneumoniae (strain ATCC 29342 / M129 / Subtype 1) (Mycoplasmoides pneumoniae).